Consider the following 493-residue polypeptide: Sorting nexin-4 (493 aa).

The tract at residues 1-67 (MDQDGFHSIA…KAGEAGDVGV (67 aa)) is disordered. Residues 37–48 (SISPSSAQPPAS) are compositionally biased toward low complexity. One can recognise a PX domain in the interval 89–211 (WMDVQVREPA…DFLQSTEWSV (123 aa)). Residues arginine 132, lysine 158, and arginine 177 each contribute to the a 1,2-diacyl-sn-glycero-3-phospho-(1D-myo-inositol-3-phosphate) site.

Belongs to the sorting nexin family.

The protein localises to the cytoplasm. It localises to the cytosol. It is found in the preautophagosomal structure membrane. The protein resides in the endosome membrane. Sorting nexin, involved in the separation or division of vacuoles throughout the entire life cycle of the cells. Involved in retrieval of late-Golgi SNAREs from post-Golgi endosomes to the trans-Golgi network, for cytoplasm to vacuole transport (Cvt), and autophagy of large cargos including mitophagy, pexophagy and glycophagy. This Cryptococcus neoformans var. neoformans serotype D (strain B-3501A) (Filobasidiella neoformans) protein is Sorting nexin-4 (SNX4).